A 38-amino-acid polypeptide reads, in one-letter code: Photosystem II reaction center protein L (38 aa).

The helical transmembrane segment at 17–37 threads the bilayer; the sequence is SLYWGLLLIFVLAVLFSNYFF.

It belongs to the PsbL family. PSII is composed of 1 copy each of membrane proteins PsbA, PsbB, PsbC, PsbD, PsbE, PsbF, PsbH, PsbI, PsbJ, PsbK, PsbL, PsbM, PsbT, PsbX, PsbY, PsbZ, Psb30/Ycf12, at least 3 peripheral proteins of the oxygen-evolving complex and a large number of cofactors. It forms dimeric complexes.

Its subcellular location is the plastid. It is found in the chloroplast thylakoid membrane. In terms of biological role, one of the components of the core complex of photosystem II (PSII). PSII is a light-driven water:plastoquinone oxidoreductase that uses light energy to abstract electrons from H(2)O, generating O(2) and a proton gradient subsequently used for ATP formation. It consists of a core antenna complex that captures photons, and an electron transfer chain that converts photonic excitation into a charge separation. This subunit is found at the monomer-monomer interface and is required for correct PSII assembly and/or dimerization. The protein is Photosystem II reaction center protein L of Oenothera argillicola (Appalachian evening primrose).